We begin with the raw amino-acid sequence, 328 residues long: 5,10-methylenetetrahydromethanopterin reductase (328 aa).

Belongs to the mer family.

The protein localises to the cytoplasm. The enzyme catalyses 5-methyl-5,6,7,8-tetrahydromethanopterin + oxidized coenzyme F420-(gamma-L-Glu)(n) + H(+) = 5,10-methylenetetrahydromethanopterin + reduced coenzyme F420-(gamma-L-Glu)(n). Its pathway is one-carbon metabolism; methanogenesis from CO(2); methyl-coenzyme M from 5,10-methylene-5,6,7,8-tetrahydromethanopterin: step 1/2. Its function is as follows. Catalyzes the reversible reduction of methylene-H(4)MPT to methyl-H(4)MPT. This chain is 5,10-methylenetetrahydromethanopterin reductase, found in Methanosarcina mazei (strain ATCC BAA-159 / DSM 3647 / Goe1 / Go1 / JCM 11833 / OCM 88) (Methanosarcina frisia).